A 122-amino-acid polypeptide reads, in one-letter code: Small ribosomal subunit protein uS13 (122 aa).

The tract at residues 94-122 (LSLPVRGQRTKTNSRTRKGKRKTVAGKKK) is disordered. Residues 101 to 122 (QRTKTNSRTRKGKRKTVAGKKK) show a composition bias toward basic residues.

This sequence belongs to the universal ribosomal protein uS13 family. As to quaternary structure, part of the 30S ribosomal subunit. Forms a loose heterodimer with protein S19. Forms two bridges to the 50S subunit in the 70S ribosome.

Functionally, located at the top of the head of the 30S subunit, it contacts several helices of the 16S rRNA. In the 70S ribosome it contacts the 23S rRNA (bridge B1a) and protein L5 of the 50S subunit (bridge B1b), connecting the 2 subunits; these bridges are implicated in subunit movement. Contacts the tRNAs in the A and P-sites. This is Small ribosomal subunit protein uS13 from Chlamydia muridarum (strain MoPn / Nigg).